The chain runs to 211 residues: Transcription factor E (211 aa).

In terms of domain architecture, HTH TFE/IIEalpha-type spans 10–130 (GNPAIYQYLL…LWLMRMDHMN (121 aa)).

It belongs to the TFE family. In terms of assembly, monomer. Interaction with RNA polymerase subunits RpoF and RpoE is necessary for Tfe stimulatory transcription activity. Able to interact with Tbp and RNA polymerase in the absence of DNA promoter. Interacts both with the preinitiation and elongation complexes.

In terms of biological role, transcription factor that plays a role in the activation of archaeal genes transcribed by RNA polymerase. Facilitates transcription initiation by enhancing TATA-box recognition by TATA-box-binding protein (Tbp), and transcription factor B (Tfb) and RNA polymerase recruitment. Not absolutely required for transcription in vitro, but particularly important in cases where Tbp or Tfb function is not optimal. It dynamically alters the nucleic acid-binding properties of RNA polymerases by stabilizing the initiation complex and destabilizing elongation complexes. Seems to translocate with the RNA polymerase following initiation and acts by binding to the non template strand of the transcription bubble in elongation complexes. This Methanocorpusculum labreanum (strain ATCC 43576 / DSM 4855 / Z) protein is Transcription factor E.